The primary structure comprises 81 residues: MSKLGVVLFTLLLLVPLVTPERDGGKWTMLAKNKKAMKRNLMDFITRTCDPYYCNDGKVCCPEYPTCGDSTGKLICVRVTD.

Residues 1–20 form the signal peptide; sequence MSKLGVVLFTLLLLVPLVTP. Positions 21–47 are excised as a propeptide; the sequence is ERDGGKWTMLAKNKKAMKRNLMDFITR. Disulfide bonds link Cys49-Cys61, Cys54-Cys67, and Cys60-Cys76.

It belongs to the conotoxin M superfamily. As to expression, expressed by the venom duct.

Its subcellular location is the secreted. The chain is Conotoxin Im6.1 from Conus imperialis (Imperial cone).